The chain runs to 255 residues: Indole-3-glycerol phosphate synthase (255 aa).

The protein belongs to the TrpC family.

It carries out the reaction 1-(2-carboxyphenylamino)-1-deoxy-D-ribulose 5-phosphate + H(+) = (1S,2R)-1-C-(indol-3-yl)glycerol 3-phosphate + CO2 + H2O. It participates in amino-acid biosynthesis; L-tryptophan biosynthesis; L-tryptophan from chorismate: step 4/5. This Priestia megaterium (strain ATCC 12872 / QMB1551) (Bacillus megaterium) protein is Indole-3-glycerol phosphate synthase (trpC).